The sequence spans 90 residues: MLDGKKLGALIKDKRKEKHLKQTEMAKALGMSRTYLSDIENGRYLPSTKTLSRIAILINLDLNVLKMTEIQVVEEGGYDRAAGTCRRQAL.

The 55-residue stretch at 11 to 65 (IKDKRKEKHLKQTEMAKALGMSRTYLSDIENGRYLPSTKTLSRIAILINLDLNVL) folds into the HTH cro/C1-type domain. The H-T-H motif DNA-binding region spans 22–41 (QTEMAKALGMSRTYLSDIEN).

The protein is ImmF control region 10 kDa protein of Bacillus phage phi105 (Bacteriophage phi-105).